The primary structure comprises 219 residues: Ribosome maturation factor RimP (219 aa).

2 disordered regions span residues methionine 1 to arginine 38 and valine 189 to arginine 219. A compositionally biased stretch (acidic residues) spans aspartate 198–arginine 219.

This sequence belongs to the RimP family.

It is found in the cytoplasm. In terms of biological role, required for maturation of 30S ribosomal subunits. The polypeptide is Ribosome maturation factor RimP (Salinispora arenicola (strain CNS-205)).